The primary structure comprises 296 residues: Urease accessory protein UreD (296 aa).

Belongs to the UreD family. UreD, UreF and UreG form a complex that acts as a GTP-hydrolysis-dependent molecular chaperone, activating the urease apoprotein by helping to assemble the nickel containing metallocenter of UreC. The UreE protein probably delivers the nickel.

The protein resides in the cytoplasm. Its function is as follows. Required for maturation of urease via the functional incorporation of the urease nickel metallocenter. The chain is Urease accessory protein UreD from Janthinobacterium sp. (strain Marseille) (Minibacterium massiliensis).